The chain runs to 261 residues: Cytochrome c oxidase subunit 3 (261 aa).

At 1-15 (MTHQTHAYHMVNPSP) the chain is on the mitochondrial matrix side. A helical transmembrane segment spans residues 16-34 (WPLTGAMSALLLTSGLIMW). The Mitochondrial intermembrane portion of the chain corresponds to 35-40 (FHFNSY). A helical membrane pass occupies residues 41–66 (TLLLLGLLTNLISSYQWWRDIVREGT). Residues 67–72 (YQGHHT) are Mitochondrial matrix-facing. The chain crosses the membrane as a helical span at residues 73–105 (KIVQKGLRYGMILFIISEVFFFLGFFWAFYHSS). At 106-128 (LAPTPELGGCWPPTGISPLNPLE) the chain is on the mitochondrial intermembrane side. Residues 129 to 152 (VPLLNTSILLASGVSITWAHHSLM) form a helical membrane-spanning segment. Topologically, residues 153–155 (EGN) are mitochondrial matrix. Residues 156-183 (RKQMLQALTITIALGLYFTALQAMEYYE) form a helical membrane-spanning segment. At 184 to 190 (ASFTISD) the chain is on the mitochondrial intermembrane side. Residues 191–223 (GVYGSTFFVATGFHGLHVIIGTTFLITCLVRQT) form a helical membrane-spanning segment. The Mitochondrial matrix segment spans residues 224 to 232 (LYHFTSNHH). The helical transmembrane segment at 233–256 (FGFEAAAWYWHFVDVVWLFLYVSI) threads the bilayer. At 257 to 261 (YWWGS) the chain is on the mitochondrial intermembrane side.

It belongs to the cytochrome c oxidase subunit 3 family. In terms of assembly, component of the cytochrome c oxidase (complex IV, CIV), a multisubunit enzyme composed of 14 subunits. The complex is composed of a catalytic core of 3 subunits MT-CO1, MT-CO2 and MT-CO3, encoded in the mitochondrial DNA, and 11 supernumerary subunits COX4I, COX5A, COX5B, COX6A, COX6B, COX6C, COX7A, COX7B, COX7C, COX8 and NDUFA4, which are encoded in the nuclear genome. The complex exists as a monomer or a dimer and forms supercomplexes (SCs) in the inner mitochondrial membrane with NADH-ubiquinone oxidoreductase (complex I, CI) and ubiquinol-cytochrome c oxidoreductase (cytochrome b-c1 complex, complex III, CIII), resulting in different assemblies (supercomplex SCI(1)III(2)IV(1) and megacomplex MCI(2)III(2)IV(2)).

Its subcellular location is the mitochondrion inner membrane. It carries out the reaction 4 Fe(II)-[cytochrome c] + O2 + 8 H(+)(in) = 4 Fe(III)-[cytochrome c] + 2 H2O + 4 H(+)(out). Component of the cytochrome c oxidase, the last enzyme in the mitochondrial electron transport chain which drives oxidative phosphorylation. The respiratory chain contains 3 multisubunit complexes succinate dehydrogenase (complex II, CII), ubiquinol-cytochrome c oxidoreductase (cytochrome b-c1 complex, complex III, CIII) and cytochrome c oxidase (complex IV, CIV), that cooperate to transfer electrons derived from NADH and succinate to molecular oxygen, creating an electrochemical gradient over the inner membrane that drives transmembrane transport and the ATP synthase. Cytochrome c oxidase is the component of the respiratory chain that catalyzes the reduction of oxygen to water. Electrons originating from reduced cytochrome c in the intermembrane space (IMS) are transferred via the dinuclear copper A center (CU(A)) of subunit 2 and heme A of subunit 1 to the active site in subunit 1, a binuclear center (BNC) formed by heme A3 and copper B (CU(B)). The BNC reduces molecular oxygen to 2 water molecules using 4 electrons from cytochrome c in the IMS and 4 protons from the mitochondrial matrix. The chain is Cytochrome c oxidase subunit 3 (MT-CO3) from Ornithorhynchus anatinus (Duckbill platypus).